An 878-amino-acid chain; its full sequence is Interleukin-3 receptor class 2 subunit beta (878 aa).

Residues 1-22 form the signal peptide; the sequence is MDQQMALTWGLCYMALVALCWG. The Extracellular segment spans residues 23–440; the sequence is HEVTEEEETV…SNEYTWTTDW (418 aa). Cysteines 39 and 49 form a disulfide. Asn-62 is a glycosylation site (N-linked (GlcNAc...) asparagine). Cysteines 78 and 95 form a disulfide. Residues 139-244 enclose the Fibronectin type-III 1 domain; the sequence is PPKDIHISPS…PEVHWDSQPG (106 aa). Residues 223–244 are disordered; it reads GSSLSGRPSRWSPEVHWDSQPG. Intrachain disulfides connect Cys-254-Cys-264 and Cys-293-Cys-310. Residues 343–438 enclose the Fibronectin type-III 2 domain; sequence QMEPPILNQT…EWSNEYTWTT (96 aa). N-linked (GlcNAc...) asparagine glycosylation occurs at Asn-350. A WSXWS motif motif is present at residues 427–431; sequence WSEWS. The helical transmembrane segment at 441 to 462 threads the bilayer; that stretch reads VMPTLWIVLILVFLIFTLLLAL. Residues 463-878 are Cytoplasmic-facing; sequence HFGRVYGYRT…AIQFFKSLKY (416 aa). The Box 1 motif signature appears at 476-484; that stretch reads WKEKIPNPS. Disordered stretches follow at residues 539 to 620 and 660 to 709; these read LTIE…GGSL and SSLE…MASD. Positions 554–570 are enriched in polar residues; the sequence is PDTTPAASSESTEQLPN. A compositionally biased stretch (basic and acidic residues) spans 671–689; sequence EPKENPPVELSVEKQEARD. Residues Ser-752 and Ser-754 each carry the phosphoserine modification. Residue Tyr-765 is modified to Phosphotyrosine. Disordered regions lie at residues 771 to 810 and 829 to 849; these read SVSQ…PHPE and PGSL…ETED.

The protein belongs to the type I cytokine receptor family. Type 4 subfamily. Heterodimer of an alpha and a beta subunit.

It localises to the membrane. In terms of biological role, in mouse, there are two classes of high-affinity IL3 receptors. One contains this IL3-specific beta subunit and the other contains the beta subunit also shared by high-affinity IL5 and GM-CSF receptors. This chain is Interleukin-3 receptor class 2 subunit beta (Csf2rb2), found in Mus musculus (Mouse).